Consider the following 83-residue polypeptide: RNA-binding protein Hfq (83 aa).

The Sm domain maps to aspartate 9–valine 69.

Belongs to the Hfq family. Homohexamer.

In terms of biological role, RNA chaperone that binds small regulatory RNA (sRNAs) and mRNAs to facilitate mRNA translational regulation in response to envelope stress, environmental stress and changes in metabolite concentrations. Also binds with high specificity to tRNAs. The sequence is that of RNA-binding protein Hfq from Exiguobacterium sibiricum (strain DSM 17290 / CCUG 55495 / CIP 109462 / JCM 13490 / 255-15).